Consider the following 120-residue polypeptide: Putative cysteine proteinase inhibitor 11 (120 aa).

Residues 1-24 (MARHPGLLLILLAAVAAVATTSRA) form the signal peptide. Residues 73-77 (QVVQG) carry the Secondary area of contact motif.

It belongs to the cystatin family. Phytocystatin subfamily.

The protein resides in the secreted. In terms of biological role, specific inhibitor of cysteine proteinases. Probably involved in the regulation of endogenous processes and in defense against pests and pathogens. In Oryza sativa subsp. japonica (Rice), this protein is Putative cysteine proteinase inhibitor 11.